The sequence spans 231 residues: 7-cyano-7-deazaguanine synthase (231 aa).

8–18 (FSGGQDSTTCL) is a binding site for ATP. Positions 188, 197, 200, and 203 each coordinate Zn(2+).

Belongs to the QueC family. Zn(2+) serves as cofactor.

It carries out the reaction 7-carboxy-7-deazaguanine + NH4(+) + ATP = 7-cyano-7-deazaguanine + ADP + phosphate + H2O + H(+). It participates in purine metabolism; 7-cyano-7-deazaguanine biosynthesis. In terms of biological role, catalyzes the ATP-dependent conversion of 7-carboxy-7-deazaguanine (CDG) to 7-cyano-7-deazaguanine (preQ(0)). The polypeptide is 7-cyano-7-deazaguanine synthase (Salmonella gallinarum (strain 287/91 / NCTC 13346)).